Consider the following 470-residue polypeptide: Poly(A) polymerase catalytic subunit (470 aa).

Active-site residues include aspartate 192 and aspartate 194.

The protein belongs to the poxviridae poly(A) polymerase catalytic subunit family. In terms of assembly, heterodimer of a large (catalytic) subunit and a small (regulatory) subunit.

It carries out the reaction RNA(n) + ATP = RNA(n)-3'-adenine ribonucleotide + diphosphate. In terms of biological role, polymerase that creates the 3'-poly(A) tail of mRNA's. The chain is Poly(A) polymerase catalytic subunit (PAPL) from Oryctolagus cuniculus (Rabbit).